The chain runs to 89 residues: Kunitz-type protease inhibitor 3 (89 aa).

The first 24 residues, 1–24, serve as a signal peptide directing secretion; it reads MQLQASLSFLLILTLCLELRSELA. In terms of domain architecture, BPTI/Kunitz inhibitor spans 36-86; sequence CAFPMEKGPCQTYMTRWFFNFETGECELFAYGGCGGNSNNFLRKEKCEKFC. 3 disulfide bridges follow: C36–C86, C45–C69, and C61–C82.

It localises to the secreted. This chain is Kunitz-type protease inhibitor 3 (SPINT3), found in Homo sapiens (Human).